The primary structure comprises 284 residues: Bifunctional protein FolD (284 aa).

NADP(+) is bound by residues 166-168 (GAS) and isoleucine 232.

The protein belongs to the tetrahydrofolate dehydrogenase/cyclohydrolase family. As to quaternary structure, homodimer.

It catalyses the reaction (6R)-5,10-methylene-5,6,7,8-tetrahydrofolate + NADP(+) = (6R)-5,10-methenyltetrahydrofolate + NADPH. The catalysed reaction is (6R)-5,10-methenyltetrahydrofolate + H2O = (6R)-10-formyltetrahydrofolate + H(+). The protein operates within one-carbon metabolism; tetrahydrofolate interconversion. In terms of biological role, catalyzes the oxidation of 5,10-methylenetetrahydrofolate to 5,10-methenyltetrahydrofolate and then the hydrolysis of 5,10-methenyltetrahydrofolate to 10-formyltetrahydrofolate. This Azotobacter vinelandii (strain DJ / ATCC BAA-1303) protein is Bifunctional protein FolD.